Consider the following 60-residue polypeptide: Mastoparan-VB1 (60 aa).

Residues 1–23 (MKNTILLLFTAFIFLSGFFGMSA) form the signal peptide. The propeptide occupies 24–45 (EALADPKADPLAGPFPDADPDP). AXPX repeat units lie at residues 27-30 (ADPK), 31-34 (ADPL), 35-38 (AGPF), and 40-43 (DADP). L59 is subject to Leucine amide.

As to expression, expressed by the venom gland.

It localises to the secreted. Its subcellular location is the target cell membrane. Functionally, antimicrobial peptide. Shows activity against both Gram-positive (S.aureus MIC=1.9-3.75 ug/ml) and -negative (E.coli MIC=15-60 ug/ml) bacteria, as well against fungi (C.albicans MIC=15 ug/ml). Also promotes moderate mast cell degranulation. Does not show hemolytic activity on rabbit and human erythrocytes. Its mast cell degranulation activity may be related to the activation of G-protein coupled receptors in mast cells as well as interaction with other proteins located in cell endosomal membranes in the mast cells. The protein is Mastoparan-VB1 of Vespa bicolor (Black shield wasp).